We begin with the raw amino-acid sequence, 156 residues long: Deoxyuridine 5'-triphosphate nucleotidohydrolase (156 aa).

Residues 76 to 78 (RSG), asparagine 89, 93 to 95 (TVD), and lysine 103 contribute to the substrate site.

This sequence belongs to the dUTPase family. It depends on Mg(2+) as a cofactor.

It carries out the reaction dUTP + H2O = dUMP + diphosphate + H(+). Its pathway is pyrimidine metabolism; dUMP biosynthesis; dUMP from dCTP (dUTP route): step 2/2. Its function is as follows. This enzyme is involved in nucleotide metabolism: it produces dUMP, the immediate precursor of thymidine nucleotides and it decreases the intracellular concentration of dUTP so that uracil cannot be incorporated into DNA. The chain is Deoxyuridine 5'-triphosphate nucleotidohydrolase from Rhizobium etli (strain CIAT 652).